We begin with the raw amino-acid sequence, 335 residues long: Holliday junction branch migration complex subunit RuvB (335 aa).

Residues 4-184 form a large ATPase domain (RuvB-L) region; it reads ADRLIDATEK…FGIVQRLEFY (181 aa). Residues Ile23, Arg24, Gly65, Lys68, Thr69, Thr70, 131–133, Arg174, Tyr184, and Arg221 contribute to the ATP site; that span reads EDY. A Mg(2+)-binding site is contributed by Thr69. Residues 185–255 form a small ATPAse domain (RuvB-S) region; it reads SVEDLSYIVG…VAELALNMID (71 aa). The head domain (RuvB-H) stretch occupies residues 258–335; sequence KSGFDYMDRK…HHFGLLPKQD (78 aa). Residues Arg313 and Arg318 each coordinate DNA.

The protein belongs to the RuvB family. Homohexamer. Forms an RuvA(8)-RuvB(12)-Holliday junction (HJ) complex. HJ DNA is sandwiched between 2 RuvA tetramers; dsDNA enters through RuvA and exits via RuvB. An RuvB hexamer assembles on each DNA strand where it exits the tetramer. Each RuvB hexamer is contacted by two RuvA subunits (via domain III) on 2 adjacent RuvB subunits; this complex drives branch migration. In the full resolvosome a probable DNA-RuvA(4)-RuvB(12)-RuvC(2) complex forms which resolves the HJ.

It localises to the cytoplasm. It catalyses the reaction ATP + H2O = ADP + phosphate + H(+). In terms of biological role, the RuvA-RuvB-RuvC complex processes Holliday junction (HJ) DNA during genetic recombination and DNA repair, while the RuvA-RuvB complex plays an important role in the rescue of blocked DNA replication forks via replication fork reversal (RFR). RuvA specifically binds to HJ cruciform DNA, conferring on it an open structure. The RuvB hexamer acts as an ATP-dependent pump, pulling dsDNA into and through the RuvAB complex. RuvB forms 2 homohexamers on either side of HJ DNA bound by 1 or 2 RuvA tetramers; 4 subunits per hexamer contact DNA at a time. Coordinated motions by a converter formed by DNA-disengaged RuvB subunits stimulates ATP hydrolysis and nucleotide exchange. Immobilization of the converter enables RuvB to convert the ATP-contained energy into a lever motion, pulling 2 nucleotides of DNA out of the RuvA tetramer per ATP hydrolyzed, thus driving DNA branch migration. The RuvB motors rotate together with the DNA substrate, which together with the progressing nucleotide cycle form the mechanistic basis for DNA recombination by continuous HJ branch migration. Branch migration allows RuvC to scan DNA until it finds its consensus sequence, where it cleaves and resolves cruciform DNA. This Pseudoalteromonas translucida (strain TAC 125) protein is Holliday junction branch migration complex subunit RuvB.